Consider the following 229-residue polypeptide: NAD(P)H-quinone oxidoreductase subunit K, chloroplastic (229 aa).

4 residues coordinate [4Fe-4S] cluster: cysteine 43, cysteine 44, cysteine 108, and cysteine 139.

Belongs to the complex I 20 kDa subunit family. In terms of assembly, NDH is composed of at least 16 different subunits, 5 of which are encoded in the nucleus. [4Fe-4S] cluster is required as a cofactor.

The protein resides in the plastid. Its subcellular location is the chloroplast thylakoid membrane. It catalyses the reaction a plastoquinone + NADH + (n+1) H(+)(in) = a plastoquinol + NAD(+) + n H(+)(out). It carries out the reaction a plastoquinone + NADPH + (n+1) H(+)(in) = a plastoquinol + NADP(+) + n H(+)(out). Functionally, NDH shuttles electrons from NAD(P)H:plastoquinone, via FMN and iron-sulfur (Fe-S) centers, to quinones in the photosynthetic chain and possibly in a chloroplast respiratory chain. The immediate electron acceptor for the enzyme in this species is believed to be plastoquinone. Couples the redox reaction to proton translocation, and thus conserves the redox energy in a proton gradient. This Coffea arabica (Arabian coffee) protein is NAD(P)H-quinone oxidoreductase subunit K, chloroplastic.